A 561-amino-acid chain; its full sequence is MTANTGEPYKRHSNESPVDRNINVNAIQSDKFLSLLLSMVPVVCQTGQEERLKKVNGLTPIGYGFNIRTDQHLEFHNLSEPNYLGNGLHCSSLCSTNYDFDGYDYCDGINASETDAMLQDSRSSADGDKDALVEGSKKQTKESSIAMALQILVPFLLAGFGTVSAGMVLDIVQHWDVFKNLTEVFILVPALLGLKGNLEMTLASRLSTAVNVGKMDSPIEKWNLIIGNLALKQVQATVVGFLAAVFAVILGWIPDGKYQLDHAILLCSSSVATAFIASLLQGIIMVGVIVGSKKTGINPDNVATPIAASFGDLITLAILAWISQGLYNCLGSYAFVSPLVGVFFLAMTPIWIVIASKHPATRTVLHSGWEPVITAMLISSIGGLILDTTVSDPNLVGIVVYTPVINGIGGNLVAIQASRISTYLHLYSIPGELPEDAKGCYHPCRTFCGTGVNNKSAQVLLSLVIPGHLIFLYTIYLMKSGHTSLTPIFVAVYLLAALLQVFALLWIADWMVHHIWRKGKDPDSFSIPYLTALGDLLGTALLAISFHILWIIGDRDGDVGD.

At 1–150 (MTANTGEPYK…KESSIAMALQ (150 aa)) the chain is on the extracellular side. The helical transmembrane segment at 151–171 (ILVPFLLAGFGTVSAGMVLDI) threads the bilayer. The Cytoplasmic segment spans residues 172-183 (VQHWDVFKNLTE). The helical transmembrane segment at 184 to 204 (VFILVPALLGLKGNLEMTLAS) threads the bilayer. Residues 205-233 (RLSTAVNVGKMDSPIEKWNLIIGNLALKQ) are Extracellular-facing. Residues 234 to 254 (VQATVVGFLAAVFAVILGWIP) traverse the membrane as a helical segment. Over 255–270 (DGKYQLDHAILLCSSS) the chain is Cytoplasmic. The helical transmembrane segment at 271–291 (VATAFIASLLQGIIMVGVIVG) threads the bilayer. Residues 292 to 301 (SKKTGINPDN) lie on the Extracellular side of the membrane. Residues 302–322 (VATPIAASFGDLITLAILAWI) form a helical membrane-spanning segment. The Cytoplasmic portion of the chain corresponds to 323–333 (SQGLYNCLGSY). Residues 334 to 354 (AFVSPLVGVFFLAMTPIWIVI) traverse the membrane as a helical segment. Residues 355 to 364 (ASKHPATRTV) lie on the Extracellular side of the membrane. The helical transmembrane segment at 365-385 (LHSGWEPVITAMLISSIGGLI) threads the bilayer. The Cytoplasmic portion of the chain corresponds to 386 to 394 (LDTTVSDPN). Residues 395-415 (LVGIVVYTPVINGIGGNLVAI) form a helical membrane-spanning segment. Topologically, residues 416 to 457 (QASRISTYLHLYSIPGELPEDAKGCYHPCRTFCGTGVNNKSA) are extracellular. Residues 458-478 (QVLLSLVIPGHLIFLYTIYLM) traverse the membrane as a helical segment. The Cytoplasmic segment spans residues 479–487 (KSGHTSLTP). Residues 488 to 508 (IFVAVYLLAALLQVFALLWIA) form a helical membrane-spanning segment. The Extracellular portion of the chain corresponds to 509–531 (DWMVHHIWRKGKDPDSFSIPYLT). Residues 532–552 (ALGDLLGTALLAISFHILWII) traverse the membrane as a helical segment. Residues 553–561 (GDRDGDVGD) are Cytoplasmic-facing.

Belongs to the SLC41A transporter family.

It is found in the cell membrane. The enzyme catalyses Mg(2+)(in) = Mg(2+)(out). It carries out the reaction Mn(2+)(in) = Mn(2+)(out). The catalysed reaction is Co(2+)(in) = Co(2+)(out). It catalyses the reaction Ni(2+)(in) = Ni(2+)(out). The enzyme catalyses Fe(2+)(in) = Fe(2+)(out). In terms of biological role, acts as a plasma-membrane magnesium transporter. Can also mediate the transport of other divalent metal cations in an order of Ba(2+) &gt; Ni(2+) &gt; Co(2+) &gt; Fe(2+) &gt; Mn(2+). The chain is Solute carrier family 41 member 2 (slc41a2) from Xenopus laevis (African clawed frog).